Consider the following 313-residue polypeptide: Ribosomal RNA small subunit methyltransferase H (313 aa).

S-adenosyl-L-methionine is bound by residues 33–35, glutamate 52, phenylalanine 80, aspartate 101, and glutamine 108; that span reads AGH.

The protein belongs to the methyltransferase superfamily. RsmH family.

Its subcellular location is the cytoplasm. It carries out the reaction cytidine(1402) in 16S rRNA + S-adenosyl-L-methionine = N(4)-methylcytidine(1402) in 16S rRNA + S-adenosyl-L-homocysteine + H(+). In terms of biological role, specifically methylates the N4 position of cytidine in position 1402 (C1402) of 16S rRNA. The protein is Ribosomal RNA small subunit methyltransferase H of Spiroplasma kunkelii.